A 367-amino-acid polypeptide reads, in one-letter code: Large ribosomal subunit protein mL38 (367 aa).

Residues 1–29 (MLRRSIHTTKILQKPNATSHIWSDFTTRP) constitute a mitochondrion transit peptide.

This sequence belongs to the phosphatidylethanolamine-binding protein family. Mitochondrion-specific ribosomal protein mL38 subfamily. As to quaternary structure, component of the mitochondrial large ribosomal subunit (mt-LSU). Mature yeast 74S mitochondrial ribosomes consist of a small (37S) and a large (54S) subunit. The 37S small subunit contains a 15S ribosomal RNA (15S mt-rRNA) and 34 different proteins. The 54S large subunit contains a 21S rRNA (21S mt-rRNA) and 46 different proteins.

It localises to the mitochondrion. Functionally, component of the mitochondrial ribosome (mitoribosome), a dedicated translation machinery responsible for the synthesis of mitochondrial genome-encoded proteins, including at least some of the essential transmembrane subunits of the mitochondrial respiratory chain. The mitoribosomes are attached to the mitochondrial inner membrane and translation products are cotranslationally integrated into the membrane. The chain is Large ribosomal subunit protein mL38 (MRPL35) from Saccharomyces cerevisiae (strain ATCC 204508 / S288c) (Baker's yeast).